A 318-amino-acid chain; its full sequence is Aspartate carbamoyltransferase catalytic subunit (318 aa).

Residues arginine 58 and threonine 59 each coordinate carbamoyl phosphate. Lysine 86 serves as a coordination point for L-aspartate. Carbamoyl phosphate is bound by residues arginine 108, histidine 141, and glutamine 144. Residues arginine 174 and arginine 226 each contribute to the L-aspartate site. Positions 270 and 271 each coordinate carbamoyl phosphate.

Belongs to the aspartate/ornithine carbamoyltransferase superfamily. ATCase family. In terms of assembly, heterododecamer (2C3:3R2) of six catalytic PyrB chains organized as two trimers (C3), and six regulatory PyrI chains organized as three dimers (R2).

It carries out the reaction carbamoyl phosphate + L-aspartate = N-carbamoyl-L-aspartate + phosphate + H(+). The protein operates within pyrimidine metabolism; UMP biosynthesis via de novo pathway; (S)-dihydroorotate from bicarbonate: step 2/3. Functionally, catalyzes the condensation of carbamoyl phosphate and aspartate to form carbamoyl aspartate and inorganic phosphate, the committed step in the de novo pyrimidine nucleotide biosynthesis pathway. This chain is Aspartate carbamoyltransferase catalytic subunit, found in Lactobacillus gasseri (strain ATCC 33323 / DSM 20243 / BCRC 14619 / CIP 102991 / JCM 1131 / KCTC 3163 / NCIMB 11718 / NCTC 13722 / AM63).